Here is an 82-residue protein sequence, read N- to C-terminus: uncharacterized protein (82 aa).

This is an uncharacterized protein from Saccharomyces cerevisiae (strain ATCC 204508 / S288c) (Baker's yeast).